A 248-amino-acid polypeptide reads, in one-letter code: PF03932 family protein CutC (248 aa).

It belongs to the CutC family.

The protein resides in the cytoplasm. The chain is PF03932 family protein CutC from Porphyromonas gingivalis (strain ATCC BAA-308 / W83).